Consider the following 104-residue polypeptide: Large ribosomal subunit protein uL23 (104 aa).

This sequence belongs to the universal ribosomal protein uL23 family. Part of the 50S ribosomal subunit. Contacts protein L29, and trigger factor when it is bound to the ribosome.

In terms of biological role, one of the early assembly proteins it binds 23S rRNA. One of the proteins that surrounds the polypeptide exit tunnel on the outside of the ribosome. Forms the main docking site for trigger factor binding to the ribosome. The polypeptide is Large ribosomal subunit protein uL23 (Neisseria meningitidis serogroup B (strain ATCC BAA-335 / MC58)).